A 434-amino-acid chain; its full sequence is tRNA dimethylallyltransferase (434 aa).

Residue 10–17 participates in ATP binding; the sequence is GTTGAGKS. 12–17 provides a ligand contact to substrate; it reads TGAGKS. Interaction with substrate tRNA regions lie at residues 35–38 and 166–170; these read DSMQ and RKIRR. Positions 211–233 are interaction with isopentenylpyrophosphate transferase; that stretch reads SLVLMPRLDKRVDKMLSHGLVDE. Interaction with substrate tRNA regions lie at residues 256 to 258, 281 to 299, and 291 to 298; these read QCI, RMKV…WIQS, and KSQKKWIQ. A Matrin-type zinc finger spans residues 380 to 416; the sequence is FVCEECLDKRGDPFTVIGEDAFNVHIKSRKHKTTVRR.

This sequence belongs to the IPP transferase family.

It is found in the mitochondrion. The protein resides in the cytoplasm. It localises to the nucleus. The catalysed reaction is adenosine(37) in tRNA + dimethylallyl diphosphate = N(6)-dimethylallyladenosine(37) in tRNA + diphosphate. Catalyzes the transfer of a dimethylallyl group onto the adenine at position 37 of both cytosolic and mitochondrial tRNAs, leading to the formation of N6-(dimethylallyl)adenosine (i(6)A). This Schizosaccharomyces pombe (strain 972 / ATCC 24843) (Fission yeast) protein is tRNA dimethylallyltransferase (tit1).